Here is an 89-residue protein sequence, read N- to C-terminus: Small ribosomal subunit protein uS15 (89 aa).

Belongs to the universal ribosomal protein uS15 family. As to quaternary structure, part of the 30S ribosomal subunit. Forms a bridge to the 50S subunit in the 70S ribosome, contacting the 23S rRNA.

Its function is as follows. One of the primary rRNA binding proteins, it binds directly to 16S rRNA where it helps nucleate assembly of the platform of the 30S subunit by binding and bridging several RNA helices of the 16S rRNA. Functionally, forms an intersubunit bridge (bridge B4) with the 23S rRNA of the 50S subunit in the ribosome. The protein is Small ribosomal subunit protein uS15 of Chelativorans sp. (strain BNC1).